The primary structure comprises 418 residues: Delta(14)-sterol reductase TM7SF2 (418 aa).

Helical transmembrane passes span 13–35, 62–81, 102–124, 129–148, 255–277, and 287–304; these read FGGP…HLLL, ALLL…LLPA, GFQA…LPLG, MLLP…SLFL, FGFM…QAQF, and LPMA…YYIF. Residues Lys311, Arg315, Leu338, Trp343, and 350–351 each bind NADP(+); that span reads NY. A helical transmembrane segment spans residues 355-377; it reads LIMALAWSLPCGVSHLLPYFYLL. NADP(+) is bound by residues Asp390, 394–398, and Tyr405; that span reads CLQKY.

It belongs to the ERG4/ERG24 family. As to expression, expressed in adult heart, brain, pancreas, lung, liver, skeletal muscle, kidney, ovary, prostate, testis and adrenal gland, but not detected in placenta, spleen, thymus, small intestine, colon (mucosal lining), or peripheral blood leukocytes.

The protein resides in the microsome membrane. It localises to the endoplasmic reticulum membrane. The catalysed reaction is 4,4-dimethyl-5alpha-cholesta-8,24-dien-3beta-ol + NADP(+) = 4,4-dimethyl-5alpha-cholesta-8,14,24-trien-3beta-ol + NADPH + H(+). The enzyme catalyses 5alpha-cholest-8,14-dien-3beta-ol + NADPH + H(+) = 5alpha-cholest-8-en-3beta-ol + NADP(+). It carries out the reaction 4,4-dimethyl-8,14-cholestadien-3beta-ol + NADPH + H(+) = 4,4-dimethyl-5alpha-cholest-8-en-3beta-ol + NADP(+). It participates in steroid biosynthesis; cholesterol biosynthesis. In terms of biological role, catalyzes the reduction of the C14-unsaturated bond of lanosterol, as part of the metabolic pathway leading to cholesterol biosynthesis. The polypeptide is Delta(14)-sterol reductase TM7SF2 (TM7SF2) (Homo sapiens (Human)).